Here is a 247-residue protein sequence, read N- to C-terminus: MAQQMSARNPRYKRILLKLSGEALMGSEDFGIDPKVLDRMALEVGQLVGIGVEVGLVIGGGNLFRGAALSAAGMDRVTGDHMGMLATVMNALAMRDALERSNIPALVMSAISMVGVTDHYDRRKAMRHLKSGEVVIFSAGTGNPFFTTDSAACLRAIEIQADVVLKATKVDGVYTADPFKDPNAEKFAELTYDEVLDRKLGVMDLTAICLCRDHSMPLRVFNMNKPGALLNIVLGGAEGTLIEESNE.

ATP is bound at residue 18–21 (KLSG). Residue Gly-60 participates in UMP binding. ATP contacts are provided by Gly-61 and Arg-65. UMP is bound by residues Asp-80 and 141-148 (TGNPFFTT). Residues Thr-168, Tyr-174, and Asp-177 each contribute to the ATP site.

Belongs to the UMP kinase family. In terms of assembly, homohexamer.

It is found in the cytoplasm. It catalyses the reaction UMP + ATP = UDP + ADP. It functions in the pathway pyrimidine metabolism; CTP biosynthesis via de novo pathway; UDP from UMP (UMPK route): step 1/1. With respect to regulation, inhibited by UTP. Its function is as follows. Catalyzes the reversible phosphorylation of UMP to UDP. This Stutzerimonas stutzeri (strain A1501) (Pseudomonas stutzeri) protein is Uridylate kinase.